The sequence spans 317 residues: 4-hydroxy-3-methylbut-2-enyl diphosphate reductase (317 aa).

C12 provides a ligand contact to [4Fe-4S] cluster. Residues H41 and H74 each coordinate (2E)-4-hydroxy-3-methylbut-2-enyl diphosphate. Dimethylallyl diphosphate-binding residues include H41 and H74. Isopentenyl diphosphate-binding residues include H41 and H74. [4Fe-4S] cluster is bound at residue C97. A (2E)-4-hydroxy-3-methylbut-2-enyl diphosphate-binding site is contributed by H125. H125 is a binding site for dimethylallyl diphosphate. Isopentenyl diphosphate is bound at residue H125. E127 functions as the Proton donor in the catalytic mechanism. T168 provides a ligand contact to (2E)-4-hydroxy-3-methylbut-2-enyl diphosphate. C198 contacts [4Fe-4S] cluster. The (2E)-4-hydroxy-3-methylbut-2-enyl diphosphate site is built by S226, S227, N228, and S270. Dimethylallyl diphosphate contacts are provided by S226, S227, N228, and S270. Residues S226, S227, N228, and S270 each contribute to the isopentenyl diphosphate site.

This sequence belongs to the IspH family. As to quaternary structure, homodimer. [4Fe-4S] cluster serves as cofactor.

The catalysed reaction is isopentenyl diphosphate + 2 oxidized [2Fe-2S]-[ferredoxin] + H2O = (2E)-4-hydroxy-3-methylbut-2-enyl diphosphate + 2 reduced [2Fe-2S]-[ferredoxin] + 2 H(+). The enzyme catalyses dimethylallyl diphosphate + 2 oxidized [2Fe-2S]-[ferredoxin] + H2O = (2E)-4-hydroxy-3-methylbut-2-enyl diphosphate + 2 reduced [2Fe-2S]-[ferredoxin] + 2 H(+). It participates in isoprenoid biosynthesis; dimethylallyl diphosphate biosynthesis; dimethylallyl diphosphate from (2E)-4-hydroxy-3-methylbutenyl diphosphate: step 1/1. Its pathway is isoprenoid biosynthesis; isopentenyl diphosphate biosynthesis via DXP pathway; isopentenyl diphosphate from 1-deoxy-D-xylulose 5-phosphate: step 6/6. Its function is as follows. Catalyzes the conversion of 1-hydroxy-2-methyl-2-(E)-butenyl 4-diphosphate (HMBPP) into a mixture of isopentenyl diphosphate (IPP) and dimethylallyl diphosphate (DMAPP). Acts in the terminal step of the DOXP/MEP pathway for isoprenoid precursor biosynthesis. The chain is 4-hydroxy-3-methylbut-2-enyl diphosphate reductase from Yersinia pseudotuberculosis serotype IB (strain PB1/+).